Consider the following 178-residue polypeptide: MKILLDFLPIVLFFGSYKLYGIYVATAVLMAATALQMALIYAIDRRLQTMHKVTLALILSFGALTLALQDDRFIKWKPTVLYGAMSVALALTLWALKKNFLKLLLGSQLALPDMVWLRLNWAWIAYCAFMSAINAYVVLHWSTDAWVDFKLWGYVFPLVFLIGQGLYIAPHLKNQGRT.

The next 5 membrane-spanning stretches (helical) occupy residues 10-30, 47-67, 76-96, 121-141, and 151-171; these read IVLF…AVLM, LQTM…LTLA, WKPT…LWAL, WAWI…VLHW, and LWGY…IAPH.

This sequence belongs to the YciB family.

The protein localises to the cell inner membrane. Functionally, plays a role in cell envelope biogenesis, maintenance of cell envelope integrity and membrane homeostasis. The sequence is that of Inner membrane-spanning protein YciB from Verminephrobacter eiseniae (strain EF01-2).